Here is an 82-residue protein sequence, read N- to C-terminus: Immediate early response 3-interacting protein 1 (82 aa).

2 helical membrane passes run 2–22 (AFTL…VAVL) and 62–82 (VMRV…LLFG).

The protein belongs to the YOS1 family.

The protein resides in the endoplasmic reticulum membrane. Functionally, regulator of endoplasmic reticulum secretion that acts as a key determinant of brain size. Required for secretion of extracellular matrix proteins. Required for correct brain development by depositing sufficient extracellular matrix proteins for tissue integrity and the proliferation of neural progenitors. Acts as a regulator of the unfolded protein response (UPR). The sequence is that of Immediate early response 3-interacting protein 1 from Xenopus laevis (African clawed frog).